The following is a 235-amino-acid chain: Adenosine 5'-phosphosulfate reductase (235 aa).

Residues Cys121, Cys122, Cys204, and Cys207 each contribute to the [4Fe-4S] cluster site. Cys230 (nucleophile; cysteine thiosulfonate intermediate) is an active-site residue.

It belongs to the PAPS reductase family. CysH subfamily. [4Fe-4S] cluster is required as a cofactor.

It localises to the cytoplasm. It carries out the reaction [thioredoxin]-disulfide + sulfite + AMP + 2 H(+) = adenosine 5'-phosphosulfate + [thioredoxin]-dithiol. It functions in the pathway sulfur metabolism; hydrogen sulfide biosynthesis; sulfite from sulfate. In terms of biological role, catalyzes the formation of sulfite from adenosine 5'-phosphosulfate (APS) using thioredoxin as an electron donor. The sequence is that of Adenosine 5'-phosphosulfate reductase from Geobacillus sp. (strain WCH70).